The following is a 111-amino-acid chain: BET1-like protein (111 aa).

Residues 1–86 lie on the Cytoplasmic side of the membrane; it reads MADWARAQSP…MARSGRDNRK (86 aa). A phosphoserine mark is found at Ser-9 and Ser-37. A t-SNARE coiled-coil homology domain is found at 15–77; sequence EILDRENKRM…TGSVKRFSTM (63 aa). A helical; Anchor for type IV membrane protein transmembrane segment spans residues 87–107; it reads LLCGMAVGLIVAFFILSYFLS. Topologically, residues 108 to 111 are lumenal; that stretch reads RART.

Component of a SNARE complex consisting of STX5, YKT6, GOSR1 and BET1L. Interacts with STX5.

It localises to the golgi apparatus membrane. It is found in the golgi apparatus. Its subcellular location is the trans-Golgi network membrane. Vesicle SNARE required for targeting and fusion of retrograde transport vesicles with the Golgi complex. Required for the integrity of the Golgi complex. In Pongo abelii (Sumatran orangutan), this protein is BET1-like protein.